An 852-amino-acid chain; its full sequence is Bifunctional uridylyltransferase/uridylyl-removing enzyme (852 aa).

The interval 1 to 318 (MPENLSSALE…STPMRVTLRI (318 aa)) is uridylyltransferase. Residues 319 to 672 (DDDYIQVNNQ…SRILPQSDSF (354 aa)) are uridylyl-removing. The 123-residue stretch at 436–558 (VDDHILAVVR…VQTHERLSAL (123 aa)) folds into the HD domain. ACT domains lie at 673 to 757 (QVMV…SCNR) and 785 to 852 (SVEI…EQLA).

This sequence belongs to the GlnD family. It depends on Mg(2+) as a cofactor.

It catalyses the reaction [protein-PII]-L-tyrosine + UTP = [protein-PII]-uridylyl-L-tyrosine + diphosphate. The catalysed reaction is [protein-PII]-uridylyl-L-tyrosine + H2O = [protein-PII]-L-tyrosine + UMP + H(+). Its activity is regulated as follows. Uridylyltransferase (UTase) activity is inhibited by glutamine, while glutamine activates uridylyl-removing (UR) activity. Modifies, by uridylylation and deuridylylation, the PII regulatory proteins (GlnB and homologs), in response to the nitrogen status of the cell that GlnD senses through the glutamine level. Under low glutamine levels, catalyzes the conversion of the PII proteins and UTP to PII-UMP and PPi, while under higher glutamine levels, GlnD hydrolyzes PII-UMP to PII and UMP (deuridylylation). Thus, controls uridylylation state and activity of the PII proteins, and plays an important role in the regulation of nitrogen assimilation and metabolism. The chain is Bifunctional uridylyltransferase/uridylyl-removing enzyme from Neisseria gonorrhoeae (strain NCCP11945).